The following is a 265-amino-acid chain: 3-deoxy-manno-octulosonate cytidylyltransferase (265 aa).

This sequence belongs to the KdsB family.

The protein localises to the cytoplasm. It catalyses the reaction 3-deoxy-alpha-D-manno-oct-2-ulosonate + CTP = CMP-3-deoxy-beta-D-manno-octulosonate + diphosphate. Its pathway is nucleotide-sugar biosynthesis; CMP-3-deoxy-D-manno-octulosonate biosynthesis; CMP-3-deoxy-D-manno-octulosonate from 3-deoxy-D-manno-octulosonate and CTP: step 1/1. It functions in the pathway bacterial outer membrane biogenesis; lipopolysaccharide biosynthesis. Activates KDO (a required 8-carbon sugar) for incorporation into bacterial lipopolysaccharide in Gram-negative bacteria. This chain is 3-deoxy-manno-octulosonate cytidylyltransferase, found in Delftia acidovorans (strain DSM 14801 / SPH-1).